A 206-amino-acid chain; its full sequence is GCN5-like protein acetyltransferase Rv2170 (206 aa).

The 162-residue stretch at 44-205 (EHIRRRGWQA…AFAILGRTLP (162 aa)) folds into the N-acetyltransferase domain. The Proton donor role is filled by Y176.

Belongs to the acetyltransferase family.

The catalysed reaction is L-lysyl-[protein] + acetyl-CoA = N(6)-acetyl-L-lysyl-[protein] + CoA + H(+). The enzyme catalyses propanoyl-CoA + L-lysyl-[protein] = N(6)-propanoyl-L-lysyl-[protein] + CoA + H(+). It carries out the reaction succinyl-CoA + L-lysyl-[protein] = N(6)-succinyl-L-lysyl-[protein] + CoA + H(+). Acetyltransferase involved in the post-translational regulation of the central metabolic enzyme isocitrate dehydrogenase 1 (ICDH-1) through lysine acetylation. Catalyzes the acetylation of ICDH-1 at Lys-30 and Lys-129, using acetyl-CoA as a donor, leading to a reduction of ICDH-1 enzyme activity. Can also use propionyl-CoA and succinyl-CoA as donors. Cannot act on the isocitrate dehydrogenase 2 (ICDH-2). Might play a role in regulating the TCA cycle and methylcitrate cycle when M.tuberculosis utilizes fatty acid as carbon source. In terms of biological role, in addition, it can acetylate the amino group of isoniazid (INH), one of the first-line drugs used for the treatment of tuberculosis, thereby canceling out the drug toxicity. Acts by catalyzing the transfer of an acetyl group from acetyl-CoA to INH. Following acetylation, INH is broken down into isonicotinic acid and acetylhydrazine. M.smegmatis and M.tuberculosis H37Ra strains overexpressing Rv2170 are resistant to INH. Has little or no acetyltransferase activity with other antibiotics such as streptomycin, neomycin, kanamycin, amikacin, apramycin and gentamicin. This is GCN5-like protein acetyltransferase Rv2170 from Mycobacterium tuberculosis (strain ATCC 25618 / H37Rv).